The sequence spans 450 residues: Glutathione reductase (450 aa).

Residues Ser-14, Gly-15, Glu-34, Thr-41, Cys-42, and Lys-50 each contribute to the FAD site. Glutathione is bound at residue Ser-14. A disulfide bridge connects residues Cys-42 and Cys-47. Residue Tyr-99 participates in glutathione binding. Residue Ala-115 participates in FAD binding. Residues Ala-175, Ile-178, Glu-181, Arg-198, Arg-204, and Gly-262 each coordinate NADP(+). FAD is bound at residue Asp-303. Glu-309 lines the NADP(+) pocket. Thr-311 serves as a coordination point for FAD. Arg-319 lines the glutathione pocket. Val-342 serves as a coordination point for NADP(+). His-439 lines the FAD pocket. The Proton acceptor role is filled by His-439.

Belongs to the class-I pyridine nucleotide-disulfide oxidoreductase family. In terms of assembly, homodimer. FAD serves as cofactor.

The protein localises to the cytoplasm. It catalyses the reaction 2 glutathione + NADP(+) = glutathione disulfide + NADPH + H(+). Functionally, catalyzes the reduction of glutathione disulfide (GSSG) to reduced glutathione (GSH). Constitutes the major mechanism to maintain a high GSH:GSSG ratio in the cytosol. The protein is Glutathione reductase (gor) of Escherichia coli (strain K12).